The chain runs to 239 residues: Methylthioribulose-1-phosphate dehydratase (239 aa).

C94 provides a ligand contact to substrate. Zn(2+) contacts are provided by H112 and H114. The active-site Proton donor/acceptor is the E136. H192 contributes to the Zn(2+) binding site.

Belongs to the aldolase class II family. MtnB subfamily. Zn(2+) serves as cofactor.

The protein localises to the cytoplasm. It catalyses the reaction 5-(methylsulfanyl)-D-ribulose 1-phosphate = 5-methylsulfanyl-2,3-dioxopentyl phosphate + H2O. It functions in the pathway amino-acid biosynthesis; L-methionine biosynthesis via salvage pathway; L-methionine from S-methyl-5-thio-alpha-D-ribose 1-phosphate: step 2/6. Catalyzes the dehydration of methylthioribulose-1-phosphate (MTRu-1-P) into 2,3-diketo-5-methylthiopentyl-1-phosphate (DK-MTP-1-P). Functions in the methionine salvage pathway. May play a role in apoptosis. This Aquarana catesbeiana (American bullfrog) protein is Methylthioribulose-1-phosphate dehydratase.